Consider the following 873-residue polypeptide: Alanine--tRNA ligase (873 aa).

Positions 559, 563, 661, and 665 each coordinate Zn(2+).

The protein belongs to the class-II aminoacyl-tRNA synthetase family. Homotetramer. It depends on Zn(2+) as a cofactor.

The protein localises to the cytoplasm. It catalyses the reaction tRNA(Ala) + L-alanine + ATP = L-alanyl-tRNA(Ala) + AMP + diphosphate. Functionally, catalyzes the attachment of alanine to tRNA(Ala) in a two-step reaction: alanine is first activated by ATP to form Ala-AMP and then transferred to the acceptor end of tRNA(Ala). Also edits incorrectly charged Ser-tRNA(Ala) and Gly-tRNA(Ala) via its editing domain. The sequence is that of Alanine--tRNA ligase from Wigglesworthia glossinidia brevipalpis.